A 152-amino-acid chain; its full sequence is Lipoprotein signal peptidase (152 aa).

A run of 2 helical transmembrane segments spans residues 55–75 (NKMW…VFYM) and 85–105 (LGIS…DRVF). Residues Asp-111 and Asp-129 contribute to the active site. The helical transmembrane segment at 124-144 (VFNIADSALCIGVVLIIIQTL) threads the bilayer.

The protein belongs to the peptidase A8 family.

It is found in the cell membrane. The enzyme catalyses Release of signal peptides from bacterial membrane prolipoproteins. Hydrolyzes -Xaa-Yaa-Zaa-|-(S,diacylglyceryl)Cys-, in which Xaa is hydrophobic (preferably Leu), and Yaa (Ala or Ser) and Zaa (Gly or Ala) have small, neutral side chains.. The protein operates within protein modification; lipoprotein biosynthesis (signal peptide cleavage). This protein specifically catalyzes the removal of signal peptides from prolipoproteins. This is Lipoprotein signal peptidase from Bacillus cereus (strain B4264).